A 211-amino-acid chain; its full sequence is Claudin-1 (211 aa).

The Cytoplasmic portion of the chain corresponds to 1–7 (MANAGLQ). Residues 8–28 (LLGFILASLGWIGSIVSTALP) form a helical membrane-spanning segment. Residues 29–81 (QWKIYSYAGDNIVTAQAIYEGLWMSCVSQSTGQIQCKVFDSLLNLNSTLQATR) lie on the Extracellular side of the membrane. Residues cysteine 54 and cysteine 64 are joined by a disulfide bond. The helical transmembrane segment at 82 to 102 (ALMVIGILLGLIAIFVSTIGM) threads the bilayer. Residues 103–115 (KCMRCLEDDEVQK) are Cytoplasmic-facing. The helical transmembrane segment at 116–136 (MWMAVIGGIIFVISGLATLVA) threads the bilayer. The Extracellular segment spans residues 137–163 (TAWYGNRIVQEFYDPMTPVNARYEFGQ). The helical transmembrane segment at 164–184 (ALFTGWAAASLCLLGGALLSC) threads the bilayer. Residues 185–211 (SCPRKTTSYPTPRPYPKPTPSSGKDYV) lie on the Cytoplasmic side of the membrane. The tract at residues 190–211 (TTSYPTPRPYPKPTPSSGKDYV) is disordered. The interactions with TJP1, TJP2, TJP3 and PATJ stretch occupies residues 210-211 (YV).

This sequence belongs to the claudin family. Can form homo- and heteropolymers with other CLDN. Homopolymers interact with CLDN3, but not CLDN2, homopolymers. Directly interacts with TJP1/ZO-1, TJP2/ZO-2 and TJP3/ZO-3. Interacts with MPDZ and PATJ. Interacts with OCLN, CD81, CLDN4, CLDN6 and CLDN9. As to expression, detected in epididymis (at protein level). Detected in testis and epididymis.

It is found in the cell junction. The protein resides in the tight junction. The protein localises to the cell membrane. It localises to the basolateral cell membrane. Its function is as follows. Claudins function as major constituents of the tight junction complexes that regulate the permeability of epithelia. While some claudin family members play essential roles in the formation of impermeable barriers, others mediate the permeability to ions and small molecules. Often, several claudin family members are coexpressed and interact with each other, and this determines the overall permeability. CLDN1 is required to prevent the paracellular diffusion of small molecules through tight junctions in the epidermis and is required for the normal barrier function of the skin. Required for normal water homeostasis and to prevent excessive water loss through the skin, probably via an indirect effect on the expression levels of other proteins, since CLDN1 itself seems to be dispensable for water barrier formation in keratinocyte tight junctions. The protein is Claudin-1 (Cldn1) of Rattus norvegicus (Rat).